The following is a 1392-amino-acid chain: L-2-aminoadipate reductase (1392 aa).

K541 participates in a covalent cross-link: Glycyl lysine isopeptide (Lys-Gly) (interchain with G-Cter in ubiquitin). The 78-residue stretch at 843–920 (SQFTNVEREV…AFAAEIDRIK (78 aa)) folds into the Carrier domain. O-(pantetheine 4'-phosphoryl)serine is present on S880. K1276 is covalently cross-linked (Glycyl lysine isopeptide (Lys-Gly) (interchain with G-Cter in ubiquitin)).

This sequence belongs to the ATP-dependent AMP-binding enzyme family. Pantetheine 4'-phosphate serves as cofactor.

It carries out the reaction (S)-2-amino-6-oxohexanoate + NADP(+) + H2O = L-2-aminoadipate + NADPH + 2 H(+). The enzyme catalyses (S)-2-amino-6-oxohexanoate + NAD(+) + H2O = L-2-aminoadipate + NADH + 2 H(+). The catalysed reaction is (S)-2-amino-6-oxohexanoate + AMP + diphosphate + NADP(+) = L-2-aminoadipate + ATP + NADPH + H(+). It participates in amino-acid biosynthesis; L-lysine biosynthesis via AAA pathway; L-lysine from L-alpha-aminoadipate (fungal route): step 1/3. Functionally, catalyzes the activation of alpha-aminoadipate by ATP-dependent adenylation and the reduction of activated alpha-aminoadipate by NADPH. The activated alpha-aminoadipate is bound to the phosphopantheinyl group of the enzyme itself before it is reduced to (S)-2-amino-6-oxohexanoate. The sequence is that of L-2-aminoadipate reductase (LYS2) from Saccharomyces cerevisiae (strain ATCC 204508 / S288c) (Baker's yeast).